Here is a 406-residue protein sequence, read N- to C-terminus: Cysteine desulfurase (406 aa).

N6-(pyridoxal phosphate)lysine is present on lysine 226. Cysteine 364 (cysteine persulfide intermediate) is an active-site residue.

This sequence belongs to the class-V pyridoxal-phosphate-dependent aminotransferase family. Csd subfamily. In terms of assembly, homodimer. Interacts with SufE and the SufBCD complex composed of SufB, SufC and SufD. The interaction with SufE is required to mediate the direct transfer of the sulfur atom from the S-sulfanylcysteine. The cofactor is pyridoxal 5'-phosphate.

The protein resides in the cytoplasm. It carries out the reaction (sulfur carrier)-H + L-cysteine = (sulfur carrier)-SH + L-alanine. It catalyses the reaction L-selenocysteine + AH2 = hydrogenselenide + L-alanine + A + H(+). It participates in cofactor biosynthesis; iron-sulfur cluster biosynthesis. In terms of biological role, cysteine desulfurases mobilize the sulfur from L-cysteine to yield L-alanine, an essential step in sulfur metabolism for biosynthesis of a variety of sulfur-containing biomolecules. Component of the suf operon, which is activated and required under specific conditions such as oxidative stress and iron limitation. Acts as a potent selenocysteine lyase in vitro, that mobilizes selenium from L-selenocysteine. Selenocysteine lyase activity is however unsure in vivo. This Escherichia coli O17:K52:H18 (strain UMN026 / ExPEC) protein is Cysteine desulfurase.